Reading from the N-terminus, the 444-residue chain is Exodeoxyribonuclease 7 large subunit (444 aa).

The protein belongs to the XseA family. Heterooligomer composed of large and small subunits.

The protein localises to the cytoplasm. It catalyses the reaction Exonucleolytic cleavage in either 5'- to 3'- or 3'- to 5'-direction to yield nucleoside 5'-phosphates.. In terms of biological role, bidirectionally degrades single-stranded DNA into large acid-insoluble oligonucleotides, which are then degraded further into small acid-soluble oligonucleotides. The sequence is that of Exodeoxyribonuclease 7 large subunit from Rickettsia conorii (strain ATCC VR-613 / Malish 7).